The following is a 474-amino-acid chain: Adenosylhomocysteinase (474 aa).

Substrate is bound by residues threonine 61, aspartate 136, and glutamate 196. Residue 197–199 (TTT) participates in NAD(+) binding. The substrate site is built by lysine 226 and aspartate 230. Residues asparagine 231, 260–265 (GYGDVG), glutamate 283, asparagine 318, 339–341 (IGH), and asparagine 384 each bind NAD(+).

The protein belongs to the adenosylhomocysteinase family. Requires NAD(+) as cofactor.

It is found in the cytoplasm. It catalyses the reaction S-adenosyl-L-homocysteine + H2O = L-homocysteine + adenosine. It participates in amino-acid biosynthesis; L-homocysteine biosynthesis; L-homocysteine from S-adenosyl-L-homocysteine: step 1/1. Functionally, may play a key role in the regulation of the intracellular concentration of adenosylhomocysteine. The polypeptide is Adenosylhomocysteinase (Ralstonia nicotianae (strain ATCC BAA-1114 / GMI1000) (Ralstonia solanacearum)).